Reading from the N-terminus, the 92-residue chain is UPF0250 protein CGSHiEE_03170 (92 aa).

It belongs to the UPF0250 family.

This Haemophilus influenzae (strain PittEE) protein is UPF0250 protein CGSHiEE_03170.